Consider the following 298-residue polypeptide: Porphobilinogen deaminase (298 aa).

Residue cysteine 239 is modified to S-(dipyrrolylmethanemethyl)cysteine.

Belongs to the HMBS family. As to quaternary structure, monomer. Requires dipyrromethane as cofactor.

It carries out the reaction 4 porphobilinogen + H2O = hydroxymethylbilane + 4 NH4(+). The protein operates within porphyrin-containing compound metabolism; protoporphyrin-IX biosynthesis; coproporphyrinogen-III from 5-aminolevulinate: step 2/4. Functionally, tetrapolymerization of the monopyrrole PBG into the hydroxymethylbilane pre-uroporphyrinogen in several discrete steps. This chain is Porphobilinogen deaminase, found in Ehrlichia chaffeensis (strain ATCC CRL-10679 / Arkansas).